A 186-amino-acid chain; its full sequence is Transposon Tn21 resolvase (186 aa).

The Resolvase/invertase-type recombinase catalytic domain maps to 4-137 (QRIGYIRVST…EGIALAKQRG (134 aa)). Catalysis depends on Ser12, which acts as the O-(5'-phospho-DNA)-serine intermediate. Positions 164–183 (KTKLAREFGISRETLYQYLR) form a DNA-binding region, H-T-H motif.

This sequence belongs to the site-specific recombinase resolvase family.

Resolvase catalyzes the resolution (a site-specific recombination) of the cointegrated replicon to yield the final transposition products. In Escherichia coli, this protein is Transposon Tn21 resolvase (tnpR).